A 663-amino-acid chain; its full sequence is Polyunsaturated fatty acid lipoxygenase ALOX15 (663 aa).

A PLAT domain is found at 2-115 (GVYRVCVSTG…VQSLPVGTGC (114 aa)). In terms of domain architecture, Lipoxygenase spans 116-663 (TTVGDPQGLF…PSIVENSVAI (548 aa)). Fe cation-binding residues include H361, H366, H541, H545, and I663.

Belongs to the lipoxygenase family. In terms of assembly, interacts with PEBP1; in response to IL13/interleukin-13, prevents the interaction of PEBP1 with RAF1 to activate the ERK signaling cascade. Fe cation is required as a cofactor. In terms of tissue distribution, detected in reticulocytes (at protein level).

It is found in the cytoplasm. The protein resides in the cytosol. Its subcellular location is the cell membrane. It localises to the lipid droplet. It carries out the reaction (5Z,8Z,11Z,14Z)-eicosatetraenoate + O2 = (12S)-hydroperoxy-(5Z,8Z,10E,14Z)-eicosatetraenoate. It catalyses the reaction (5Z,8Z,11Z,14Z)-eicosatetraenoate + O2 = (15S)-hydroperoxy-(5Z,8Z,11Z,13E)-eicosatetraenoate. The enzyme catalyses (9Z,12Z)-octadecadienoate + O2 = (13S)-hydroperoxy-(9Z,11E)-octadecadienoate. The catalysed reaction is (5Z,8Z,11Z,14Z)-eicosatetraenoate + 2 O2 = (14R,15S)-dihydroperoxy-(5Z,8Z,10E,12E)-eicosatetraenoate. It carries out the reaction (5Z,8Z,11Z,14Z)-eicosatetraenoate + 2 O2 = (8S,15S)-dihydroperoxy-(5Z,9E,11Z,13E)-eicosatetraenoate. It catalyses the reaction (14S,15R)-epoxy-(5Z,8Z,11Z)-eicosatrienoate + O2 = (8S)-hydroperoxy-(14S,15R)-epoxy-(5Z,9E,11Z)-eicosatrienoate. The enzyme catalyses (14S,15R)-epoxy-(5Z,8Z,11Z)-eicosatrienoate + O2 = (12S)-hydroperoxy-(14S,15R)-epoxy-(5Z,8Z,10E)-eicosatrienoate. The catalysed reaction is (14R,15S)-epoxy-(5Z,8Z,11Z)-eicosatrienoate + O2 = (5S)-hydroperoxy-(14R,15S)-epoxy-(6E,8Z,11Z)-eicosatrienoate. It carries out the reaction (14R,15S)-epoxy-(5Z,8Z,11Z)-eicosatrienoate + O2 = (12S)-hydroperoxy-(14R,15S)-epoxy-(5Z,8Z,10E)-eicosatrienoate. It catalyses the reaction (15R)-hydroperoxy-(5Z,8Z,11Z,13E)-eicosatetraenoate = 15-oxo-(5Z,8Z,11Z,13E)-eicosatetraenoate + H2O. The enzyme catalyses (15S)-hydroperoxy-(5Z,8Z,11Z,13E)-eicosatetraenoate = (14S,15S)-epoxy-(5Z,8Z,10E,12E)-eicosatetraenoate + H2O. The catalysed reaction is (12S)-hydroperoxy-(5Z,8Z,10E,14Z)-eicosatetraenoate = (8S)-hydroxy-(11S,12S)-epoxy-(5Z,9E,14Z)-eicosatrienoate. It carries out the reaction (4Z,7Z,10Z,13Z,16Z)-docosapentaenoate + O2 = 14-hydroperoxy-(4Z,7Z,10Z,12E,16Z)-docosapentaenoate. It catalyses the reaction (7Z,10Z,13Z,16Z,19Z)-docosapentaenoate + O2 = 14-hydroperoxy-(7Z,10Z,12E,16Z,19Z)-docosapentaenoate. The enzyme catalyses (4Z,7Z,10Z,13Z,16Z,19Z)-docosahexaenoate + O2 = (14S)-hydroperoxy-(4Z,7Z,10Z,12E,16Z,19Z)-docosahexaenoate. The catalysed reaction is (4Z,7Z,10Z,13Z,16Z,19Z)-docosahexaenoate + O2 = (17S)-hydroperoxy-(4Z,7Z,10Z,13Z,15E,19Z)-docosahexaenoate. It carries out the reaction (7S)-hydroperoxy-(4Z,8E,10Z,13Z,16Z,19Z)-docosahexaenoate + O2 = (7S,14S)-dihydroperoxy-(4Z,8E,10Z,12E,16Z,19Z)-docosahexaenoate. It catalyses the reaction (7S)-hydroperoxy-(4Z,8E,10Z,13Z,16Z,19Z)-docosahexaenoate + O2 = (7S,17S)-dihydroperoxy-(4Z,8E,10Z,13Z,15E,19Z)-docosahexaenoate. The enzyme catalyses (4Z,7Z,10Z,13Z,16Z,19Z)-docosahexaenoate + O2 = (11S)-hydroperoxy-(4Z,7Z,9E,13Z,16Z,19Z)-docosahexaenoate. The catalysed reaction is N-(5Z,8Z,11Z,14Z)-eicosatetraenoyl-taurine + O2 = N-(15S)-hydroperoxy-(5Z,8Z,11Z,13E)-eicosatetraenoyl-taurine. It carries out the reaction N-(5Z,8Z,11Z,14Z)-eicosatetraenoyl-gamma-aminobutanoate + O2 = N-(15S)-hydroperoxy-(5Z,8Z,11Z,13E)-eicosatetraenoyl-gamma-aminobutanoate. It catalyses the reaction N-(5Z,8Z,11Z,14Z)-eicosatetraenoyl-glycine + O2 = N-(15S)-hydroperoxy-(5Z,8Z,11Z,13E)-eicosatetraenoyl-glycine. The enzyme catalyses N-(5Z,8Z,11Z,14Z)-eicosatetraenoyl-L-alanine + O2 = N-(15S)-hydroperoxy-(5Z,8Z,11Z,13E)-eicosatetraenoyl-alanine. The catalysed reaction is N-(5Z,8Z,11Z,14Z)-eicosatetraenoyl-taurine + O2 = N-(12S)-hydroperoxy-(5Z,8Z,10E,14Z)-eicosatetraenoyl-taurine. It carries out the reaction N-(5Z,8Z,11Z,14Z)-eicosatetraenoyl-gamma-aminobutanoate + O2 = N-(12S)-hydroperoxy-(5Z,8Z,10E,14Z)-eicosatetraenoyl-gamma-aminobutanoate. It catalyses the reaction N-(5Z,8Z,11Z,14Z)-eicosatetraenoyl-glycine + O2 = N-(12S)-hydroperoxy-(5Z,8Z,10E,14Z)-eicosatetraenoyl-glycine. The enzyme catalyses N-(5Z,8Z,11Z,14Z)-eicosatetraenoyl-L-alanine + O2 = N-(12S)-hydroperoxy-(5Z,8Z,10E,14Z)-eicosatetraenoyl-alanine. The protein operates within lipid metabolism; hydroperoxy eicosatetraenoic acid biosynthesis. In terms of biological role, non-heme iron-containing dioxygenase that catalyzes the stereo-specific peroxidation of free and esterified polyunsaturated fatty acids generating a spectrum of bioactive lipid mediators. It inserts peroxyl groups at C12 or C15 of arachidonate ((5Z,8Z,11Z,14Z)-eicosatetraenoate) producing both 12-hydroperoxyeicosatetraenoate/12-HPETE and 15-hydroperoxyeicosatetraenoate/15-HPETE. It may then act on 12-HPETE to produce hepoxilins, which may show pro-inflammatory properties. Can also peroxidize linoleate ((9Z,12Z)-octadecadienoate) to 13-hydroperoxyoctadecadienoate. May participate in the sequential oxidations of DHA ((4Z,7Z,10Z,13Z,16Z,19Z)-docosahexaenoate) to generate specialized pro-resolving mediators (SPMs)like resolvin D5 ((7S,17S)-diHPDHA) and (7S,14S)-diHPDHA, that actively down-regulate the immune response and have anti-aggregation properties with platelets. Can convert epoxy fatty acids to hydroperoxy-epoxides derivatives followed by an intramolecular nucleophilic substitution leading to the formation of monocyclic endoperoxides. Plays an important role during the maintenance of self-tolerance by peroxidizing membrane-bound phosphatidylethanolamine which can then signal the sorting process for clearance of apoptotic cells during inflammation and prevent an autoimmune response. In addition to its role in the immune and inflammatory responses, this enzyme may play a role in epithelial wound healing in the cornea through production of lipoxin A4 (LXA(4)) and docosahexaenoic acid-derived neuroprotectin D1 (NPD1; 10R,17S-HDHA), both lipid autacoids exhibit anti-inflammatory and neuroprotective properties. Furthermore, it may regulate actin polymerization which is crucial for several biological processes such as the phagocytosis of apoptotic cells. It is also implicated in the generation of endogenous ligands for peroxisome proliferator activated receptor (PPAR-gamma), hence modulating macrophage development and function. It may also exert a negative effect on skeletal development by regulating bone mass through this pathway. As well as participates in ER stress and downstream inflammation in adipocytes, pancreatic islets, and liver. Finally, it is also involved in the cellular response to IL13/interleukin-13. This Oryctolagus cuniculus (Rabbit) protein is Polyunsaturated fatty acid lipoxygenase ALOX15.